A 182-amino-acid polypeptide reads, in one-letter code: Large ribosomal subunit protein uL6 (182 aa).

Belongs to the universal ribosomal protein uL6 family. Part of the 50S ribosomal subunit.

Its function is as follows. This protein binds to the 23S rRNA, and is important in its secondary structure. It is located near the subunit interface in the base of the L7/L12 stalk, and near the tRNA binding site of the peptidyltransferase center. In Nostoc sp. (strain PCC 7120 / SAG 25.82 / UTEX 2576), this protein is Large ribosomal subunit protein uL6.